The chain runs to 146 residues: Hemoglobin subunit beta (146 aa).

The Globin domain maps to 2–146 (HWSAEEKQLI…VAHALARKYH (145 aa)). Heme b contacts are provided by histidine 63 and histidine 92.

This sequence belongs to the globin family. Heterotetramer of two alpha chains and two beta chains. In terms of tissue distribution, red blood cells.

Its function is as follows. Involved in oxygen transport from the lung to the various peripheral tissues. In Streptopelia orientalis (Eastern turtle dove), this protein is Hemoglobin subunit beta (HBB).